Consider the following 477-residue polypeptide: Glycogen synthase (477 aa).

Lys15 is an ADP-alpha-D-glucose binding site.

It belongs to the glycosyltransferase 1 family. Bacterial/plant glycogen synthase subfamily.

It carries out the reaction [(1-&gt;4)-alpha-D-glucosyl](n) + ADP-alpha-D-glucose = [(1-&gt;4)-alpha-D-glucosyl](n+1) + ADP + H(+). It participates in glycan biosynthesis; glycogen biosynthesis. Functionally, synthesizes alpha-1,4-glucan chains using ADP-glucose. This Klebsiella pneumoniae subsp. pneumoniae (strain ATCC 700721 / MGH 78578) protein is Glycogen synthase.